Reading from the N-terminus, the 122-residue chain is Crustacean hyperglycemic hormones 5 (122 aa).

Residues 1–26 (MSLGLIASRLVAVALVVVVACSTTWA) form the signal peptide. 3 disulfide bridges follow: Cys-55–Cys-91, Cys-71–Cys-87, and Cys-74–Cys-100. At Val-120 the chain carries Valine amide.

Belongs to the arthropod CHH/MIH/GIH/VIH hormone family.

The protein resides in the secreted. Functionally, hormone found in the sinus gland of isopods and decapods which controls the blood sugar level. Has a secretagogue action over the amylase released from the midgut gland. May act as a stress hormone and may be involved in the control of molting and reproduction. This is Crustacean hyperglycemic hormones 5 (CHH5) from Penaeus monodon (Giant tiger prawn).